We begin with the raw amino-acid sequence, 514 residues long: Endogenous retrovirus group PABLB member 1 Env polyprotein (514 aa).

N-linked (GlcNAc...) asparagine glycosylation is present at Asn58. Positions 60-316 are surface protein; sequence STSNVFLQWA…YPYLPHVVNQ (257 aa). A CXXC motif is present at residues 82–85; the sequence is CWVC. Asn133, Asn140, Asn155, Asn218, Asn226, and Asn267 each carry an N-linked (GlcNAc...) asparagine glycan. A transmembrane protein region spans residues 317-514; that stretch reads GTRAIVHRND…QRDIFHSNAP (198 aa). The segment at 328–348 is fusion peptide; the sequence is LPTIFMPSVGLGTVIQHIEAL. Asn350 and Asn357 each carry an N-linked (GlcNAc...) asparagine glycan. The CKS-17 signature appears at 378–394; sequence LQNRMALDILTAAEGGT. Cysteines 395 and 402 form a disulfide. Positions 395–403 match the CX6CC motif; it reads CALIKTECC. Residues Asn408 and Asn412 are each glycosylated (N-linked (GlcNAc...) asparagine). A helical transmembrane segment spans residues 452–472; sequence ILIVLATLWSVGIALCCGLYF.

Belongs to the gamma type-C retroviral envelope protein family. HERV class-I R(b) env subfamily. The CXXC motif is highly conserved across a broad range of retroviral envelope proteins. It is thought to participate in the formation of a labile disulfide bond possibly with the CX6CC motif present in the transmembrane domain. In terms of tissue distribution, low expression in placenta and testis.

The protein localises to the cell membrane. In terms of biological role, retroviral envelope proteins mediate receptor recognition and membrane fusion during early infection. Endogenous envelope proteins may have kept, lost or modified their original function during evolution. This endogenous envelope protein has lost its original fusogenic properties. The polypeptide is Endogenous retrovirus group PABLB member 1 Env polyprotein (ERVPABLB-1) (Homo sapiens (Human)).